The chain runs to 90 residues: DNA-binding protein HU (90 aa).

It belongs to the bacterial histone-like protein family. As to quaternary structure, homodimer.

Histone-like DNA-binding protein which is capable of wrapping DNA to stabilize it, and thus to prevent its denaturation under extreme environmental conditions. In Pasteurella multocida (strain Pm70), this protein is DNA-binding protein HU (hup).